A 423-amino-acid polypeptide reads, in one-letter code: D-tagatose-1,6-bisphosphate aldolase subunit GatZ (423 aa).

Belongs to the GatZ/KbaZ family. GatZ subfamily. Forms a complex with GatY.

Its pathway is carbohydrate metabolism; D-tagatose 6-phosphate degradation; D-glyceraldehyde 3-phosphate and glycerone phosphate from D-tagatose 6-phosphate: step 2/2. Its function is as follows. Component of the tagatose-1,6-bisphosphate aldolase GatYZ that is required for full activity and stability of the Y subunit. Could have a chaperone-like function for the proper and stable folding of GatY. When expressed alone, GatZ does not show any aldolase activity. Is involved in the catabolism of galactitol. The sequence is that of D-tagatose-1,6-bisphosphate aldolase subunit GatZ from Klebsiella pneumoniae subsp. pneumoniae (strain ATCC 700721 / MGH 78578).